The chain runs to 828 residues: Glycerol-3-phosphate acyltransferase 1, mitochondrial (828 aa).

Residues 1–87 (MDESALTLGT…FFNPSIPSLG (87 aa)) are Cytoplasmic-facing. The segment at 80-120 (NPSIPSLGLRNVIYINETHTRHRGWLARRLSYVLFIQERDV) is important for mitochondrial localization. The stretch at 88–118 (LRNVIYINETHTRHRGWLARRLSYVLFIQER) is an intramembrane region. Residues 119 to 828 (DVHKGMFATN…LEYILSFVVL (710 aa)) lie on the Cytoplasmic side of the membrane. Residues 230–235 (HRSHID) carry the HXXXXD motif motif. Arginine 278, arginine 279, lysine 288, arginine 293, and arginine 328 together coordinate CoA. A Phosphoserine modification is found at serine 380. The tract at residues 435–455 (SRPSDAADEGRDTSINESRNA) is disordered. Positions 442 to 455 (DEGRDTSINESRNA) are enriched in basic and acidic residues. Residue arginine 462 coordinates CoA. Phosphoserine occurs at positions 688 and 695. Residues lysine 780 and lysine 784 each carry the N6-acetyllysine modification.

It belongs to the GPAT/DAPAT family.

The protein resides in the mitochondrion outer membrane. The catalysed reaction is sn-glycerol 3-phosphate + an acyl-CoA = a 1-acyl-sn-glycero-3-phosphate + CoA. It catalyses the reaction (9Z,12Z)-octadecadienoyl-CoA + sn-glycerol 3-phosphate = 1-(9Z,12Z)-octadecadienoyl-sn-glycero-3-phosphate + CoA. It carries out the reaction sn-glycerol 3-phosphate + (9Z)-octadecenoyl-CoA = 1-(9Z-octadecenoyl)-sn-glycero-3-phosphate + CoA. The enzyme catalyses sn-glycerol 3-phosphate + octadecanoyl-CoA = 1-octadecanoyl-sn-glycero-3-phosphate + CoA. The catalysed reaction is sn-glycerol 3-phosphate + hexadecanoyl-CoA = 1-hexadecanoyl-sn-glycero-3-phosphate + CoA. It catalyses the reaction dodecanoyl-CoA + sn-glycerol 3-phosphate = 1-dodecanoyl-sn-glycerol 3-phosphate + CoA. It carries out the reaction 1-acyl-sn-glycero-3-phospho-(1'-sn-glycerol) + an acyl-CoA = a 1,2-diacyl-sn-glycero-3-phospho-(1'-sn-glycerol) + CoA. It participates in phospholipid metabolism; CDP-diacylglycerol biosynthesis; CDP-diacylglycerol from sn-glycerol 3-phosphate: step 1/3. Functionally, mitochondrial membrane protein that catalyzes the essential first step of biosynthesis of glycerolipids such as triglycerides, phosphatidic acids and lysophosphatidic acids. Esterifies acyl-group from acyl-coenzyme A (acyl-CoA) to the sn-1 position of glycerol-3-phosphate, to produce lysophosphatidic acid. Has a narrow hydrophobic binding cleft that selects for a linear acyl chain. Catalytic activity is higher for substrates with a 16-carbon acyl chain. This chain is Glycerol-3-phosphate acyltransferase 1, mitochondrial, found in Homo sapiens (Human).